The chain runs to 89 residues: Small ribosomal subunit protein uS14A (89 aa).

It belongs to the universal ribosomal protein uS14 family. Part of the 30S ribosomal subunit. Contacts proteins S3 and S10.

In terms of biological role, binds 16S rRNA, required for the assembly of 30S particles and may also be responsible for determining the conformation of the 16S rRNA at the A site. This is Small ribosomal subunit protein uS14A from Pediococcus pentosaceus (strain ATCC 25745 / CCUG 21536 / LMG 10740 / 183-1w).